A 574-amino-acid chain; its full sequence is Proline--tRNA ligase (574 aa).

Belongs to the class-II aminoacyl-tRNA synthetase family. ProS type 1 subfamily. As to quaternary structure, homodimer.

It is found in the cytoplasm. It carries out the reaction tRNA(Pro) + L-proline + ATP = L-prolyl-tRNA(Pro) + AMP + diphosphate. Its function is as follows. Catalyzes the attachment of proline to tRNA(Pro) in a two-step reaction: proline is first activated by ATP to form Pro-AMP and then transferred to the acceptor end of tRNA(Pro). As ProRS can inadvertently accommodate and process non-cognate amino acids such as alanine and cysteine, to avoid such errors it has two additional distinct editing activities against alanine. One activity is designated as 'pretransfer' editing and involves the tRNA(Pro)-independent hydrolysis of activated Ala-AMP. The other activity is designated 'posttransfer' editing and involves deacylation of mischarged Ala-tRNA(Pro). The misacylated Cys-tRNA(Pro) is not edited by ProRS. This is Proline--tRNA ligase from Ralstonia pickettii (strain 12J).